Here is a 382-residue protein sequence, read N- to C-terminus: Anhydro-N-acetylmuramic acid kinase (382 aa).

18–25 (GTSLDGVD) contributes to the ATP binding site.

This sequence belongs to the anhydro-N-acetylmuramic acid kinase family.

It carries out the reaction 1,6-anhydro-N-acetyl-beta-muramate + ATP + H2O = N-acetyl-D-muramate 6-phosphate + ADP + H(+). Its pathway is amino-sugar metabolism; 1,6-anhydro-N-acetylmuramate degradation. It participates in cell wall biogenesis; peptidoglycan recycling. Its function is as follows. Catalyzes the specific phosphorylation of 1,6-anhydro-N-acetylmuramic acid (anhMurNAc) with the simultaneous cleavage of the 1,6-anhydro ring, generating MurNAc-6-P. Is required for the utilization of anhMurNAc either imported from the medium or derived from its own cell wall murein, and thus plays a role in cell wall recycling. The sequence is that of Anhydro-N-acetylmuramic acid kinase from Ralstonia nicotianae (strain ATCC BAA-1114 / GMI1000) (Ralstonia solanacearum).